Consider the following 347-residue polypeptide: Protein RecA (347 aa).

Residue 67 to 74 (GPESSGKT) coordinates ATP.

This sequence belongs to the RecA family.

It localises to the cytoplasm. In terms of biological role, can catalyze the hydrolysis of ATP in the presence of single-stranded DNA, the ATP-dependent uptake of single-stranded DNA by duplex DNA, and the ATP-dependent hybridization of homologous single-stranded DNAs. It interacts with LexA causing its activation and leading to its autocatalytic cleavage. The protein is Protein RecA of Helicobacter pylori (strain G27).